A 543-amino-acid polypeptide reads, in one-letter code: 2,3-bisphosphoglycerate-independent phosphoglycerate mutase (543 aa).

Positions 20 and 73 each coordinate Mn(2+). Serine 73 serves as the catalytic Phosphoserine intermediate. Substrate contacts are provided by residues histidine 134, 166-167 (RD), arginine 198, arginine 204, 278-281 (RGDR), and lysine 360. Mn(2+) contacts are provided by aspartate 428, histidine 432, aspartate 469, histidine 470, and histidine 488.

Belongs to the BPG-independent phosphoglycerate mutase family. Monomer. Requires Mn(2+) as cofactor.

The catalysed reaction is (2R)-2-phosphoglycerate = (2R)-3-phosphoglycerate. The protein operates within carbohydrate degradation; glycolysis; pyruvate from D-glyceraldehyde 3-phosphate: step 3/5. Its function is as follows. Catalyzes the interconversion of 2-phosphoglycerate and 3-phosphoglycerate. In Rhodopirellula baltica (strain DSM 10527 / NCIMB 13988 / SH1), this protein is 2,3-bisphosphoglycerate-independent phosphoglycerate mutase.